The sequence spans 513 residues: Probable histone deacetylase 19 (513 aa).

A histone deacetylase region spans residues 23-334; the sequence is RRVCYFYDPD…WCYETGVALG (312 aa). The Proton donor/acceptor role is filled by histidine 154. 3 residues coordinate Zn(2+): aspartate 189, histidine 191, and aspartate 277. Disordered stretches follow at residues 384 to 432 and 446 to 513; these read HAPS…ESSR and ENAT…YHKP. Over residues 398–409 the composition is skewed to acidic residues; that stretch reads EIPEQDEDQDDP. Residues 410–432 are compositionally biased toward basic and acidic residues; the sequence is DERHDPDSDMEVDDHKAVEESSR. A compositionally biased stretch (polar residues) spans 492–504; the sequence is NVKNEPESSTKLQ.

It belongs to the histone deacetylase family. HD type 1 subfamily. Zn(2+) serves as cofactor.

The protein localises to the nucleus. The catalysed reaction is N(6)-acetyl-L-lysyl-[histone] + H2O = L-lysyl-[histone] + acetate. Functionally, responsible for the deacetylation of lysine residues on the N-terminal part of the core histones (H2A, H2B, H3 and H4). Histone deacetylation gives a tag for epigenetic repression and plays an important role in transcriptional regulation, cell cycle progression and developmental events. Histone deacetylases act via the formation of large multiprotein complexes. The polypeptide is Probable histone deacetylase 19 (Zea mays (Maize)).